Consider the following 353-residue polypeptide: Cytochrome c biogenesis protein CcsA (353 aa).

8 consecutive transmembrane segments (helical) span residues 15–35, 37–57, 68–88, 97–117, 142–162, 261–281, 288–308, and 322–342; these read FAIL…PNLP, LAAL…TLLG, LSNL…VHLI, LVGV…TMTL, VMML…AFLI, IIGL…VWAN, WSWD…AAYL, and AILA…VNLL.

The protein belongs to the CcmF/CycK/Ccl1/NrfE/CcsA family. As to quaternary structure, may interact with ccs1.

It is found in the cellular thylakoid membrane. Its function is as follows. Required during biogenesis of c-type cytochromes (cytochrome c6 and cytochrome f) at the step of heme attachment. The chain is Cytochrome c biogenesis protein CcsA from Nostoc punctiforme (strain ATCC 29133 / PCC 73102).